The primary structure comprises 1139 residues: MCRAIAVALIVYLAQHYILAHAEVIASGRLEKCVVDGVTEELDCQEKVVVTLTVGNGQSLQTEALEFSLSCLNSPDGRCPCSCSAADPTCACRDLAAPLRVSLTKSPLWASYPLQYLSSFNWKPLEVILRPSNKVCKDGDWEDSPTCGWFSQGGVRVADSQGFCCECSSSQVWDDTFGSSKERTRANLDCDFWSDPLDILIGRKPVSAHCLTFDPQWYSGYELGAASLQFEIAITVEVPTAPSPTTATTSATPRTNNSSSANSTNSTNSPAPQFLSPPAPSTREVLHLGPSVPLASSASRLLSAKLLGDLAMYTQLPAISNQVLMVPQPPAAAAATGSPLDATLATNRSAWMLLDKTMLSMDGLACDKVGTGFSAFRYQPSGCGRAPQACLSGQLKDLWEADLARIADGRVPLYMITRFTGGSDTTLQSFSGGPLSFALPVTSHSQSLVTLSVAADGVRLVTNRSPGKITGAAVCRFAGTSCGGFEAVAARGYIYVNITNTGRLDSDYTLTVSNCSSNVRPIEARTLAVRAGSAASLDPPMELYVEDQAAAAARTCTVSLYDSVGAVTDSLTLSFYTNATQLVVKPSGGYNGTGDGAGVKRNGTDCSTACTNPIDVLCFVTKKCWSKFGRLLGIIGGALVGLGLLAVALKFGWLASLAASCCGGGGGAAAGGAGGGMGLGTGGGGGCFGGGQQQQQLPPAASHAMSPPQQQQRSHAEVAAGAAVAGAGAAGAAAAVLGAKHGGGGGGARGKQQHADTRHLQDRDSRAIDGGASIGSSSAGGSSSLSSYSQPREAGGRLLQPPAAAVFVPEGGGGGAAGDEGARAQSSDWDARGRSPRVADEHGSPRQRYDGVRQSPYMVSANPYDGWYDGGSGGGGGGGGGGYGREAPPPQGPPPHPVGAPPPPPRRRSLWERMWLQRPGGGGGGGGGGGGGGGGGSGGGVDQHGGRSCADAARRGGGGPGGMRGVEGLMSNGGRPNGPHPHAPPPPPPPQQQQQQQRQRRSFLESLTAMMTLPWGGGREEEAGGDRRGGGRGGAAAAHGGRGAGGGRGHPPSIGSPPPGPLQPPEYGPQGGQARRWGAGGGRGGVGGDGGGGGVGAAAYVQLSTGGRGGGGGGGRGRGGGREGPTWHNPVYDWQAPPK.

The signal sequence occupies residues 1–22 (MCRAIAVALIVYLAQHYILAHA). At 23–630 (EVIASGRLEK…TKKCWSKFGR (608 aa)) the chain is on the extracellular side. Cystine bridges form between C33–C44, C136–C164, C147–C210, C165–C383, C167–C190, C366–C390, and C475–C482. A compositionally biased stretch (low complexity) spans 241–272 (APSPTTATTSATPRTNNSSSANSTNSTNSPAP). The tract at residues 241–283 (APSPTTATTSATPRTNNSSSANSTNSTNSPAPQFLSPPAPSTR) is disordered. N497 is a glycosylation site (N-linked (GlcNAc...) asparagine). C515 and C556 are joined by a disulfide. T577 carries O-linked (GlcNAc...) threonine glycosylation. Residues 631–651 (LLGIIGGALVGLGLLAVALKF) traverse the membrane as a helical segment. Residues 652–1139 (GWLASLAASC…PVYDWQAPPK (488 aa)) are Cytoplasmic-facing. Disordered regions lie at residues 689 to 719 (GGGQ…AEVA) and 741 to 1139 (HGGG…APPK). The span at 753 to 767 (QHADTRHLQDRDSRA) shows a compositional bias: basic and acidic residues. A compositionally biased stretch (low complexity) spans 770-789 (GGASIGSSSAGGSSSLSSYS). A compositionally biased stretch (basic and acidic residues) spans 829–851 (WDARGRSPRVADEHGSPRQRYDG). The segment covering 868 to 884 (YDGGSGGGGGGGGGGYG) has biased composition (gly residues). Positions 887–904 (APPPQGPPPHPVGAPPPP) are enriched in pro residues. Gly residues-rich tracts occupy residues 919–943 (PGGG…GVDQ) and 955–965 (RGGGGPGGMRG). The span at 978–991 (GPHPHAPPPPPPPQ) shows a compositional bias: pro residues. The span at 1018 to 1029 (GREEEAGGDRRG) shows a compositional bias: basic and acidic residues. The span at 1040 to 1049 (GGRGAGGGRG) shows a compositional bias: gly residues. The span at 1054 to 1067 (IGSPPPGPLQPPEY) shows a compositional bias: pro residues. Composition is skewed to gly residues over residues 1078-1096 (GAGG…GGVG) and 1106-1118 (GGRG…GRGR).

Belongs to the HAP2/GCS1 family. Monomer. Homotrimer. Membrane contact and insertion (via its extracellular domain) into a lipid membrane probably triggers trimerization. The protein present at the cell membrane is rapidly degraded after fusion between male (minus) and female (plus) gametes, contrary to the protein present in intracellular pools. This may represent a mechanism to avoid fusion of several male gametes with a single female gamete. Post-translationally, N-glycosylated.

The protein localises to the cell membrane. It is found in the cell projection. It localises to the cytoplasmic vesicle membrane. Functionally, during fertilization, required on male (minus) gametes for their fusion with female (plus) gametes. Required for membrane fusion, but not for the initial adhesion between gametes. Inserts (via its extracellular domain) into lipid membranes (in vitro). Probably initiates the fusion of gamete cell membranes by inserting its extracellular domain into the cell membrane of a female gamete. The protein is Hapless 2 of Chlamydomonas reinhardtii (Chlamydomonas smithii).